A 210-amino-acid chain; its full sequence is Na(+)-translocating NADH-quinone reductase subunit D (210 aa).

Transmembrane regions (helical) follow at residues 14-34 (PIVN…ALAV), 42-62 (LVMA…ISMI), 72-92 (IIVQ…LLQA), 103-123 (VFVG…AYAM), 131-151 (FMDG…VGFV), and 178-198 (NGLL…IWII).

It belongs to the NqrDE/RnfAE family. As to quaternary structure, composed of six subunits; NqrA, NqrB, NqrC, NqrD, NqrE and NqrF.

It localises to the cell inner membrane. It catalyses the reaction a ubiquinone + n Na(+)(in) + NADH + H(+) = a ubiquinol + n Na(+)(out) + NAD(+). In terms of biological role, NQR complex catalyzes the reduction of ubiquinone-1 to ubiquinol by two successive reactions, coupled with the transport of Na(+) ions from the cytoplasm to the periplasm. NqrA to NqrE are probably involved in the second step, the conversion of ubisemiquinone to ubiquinol. The chain is Na(+)-translocating NADH-quinone reductase subunit D from Shewanella oneidensis (strain ATCC 700550 / JCM 31522 / CIP 106686 / LMG 19005 / NCIMB 14063 / MR-1).